Consider the following 123-residue polypeptide: Small ribosomal subunit protein uS12c (123 aa).

The protein belongs to the universal ribosomal protein uS12 family. Part of the 30S ribosomal subunit.

Its subcellular location is the plastid. It is found in the chloroplast. Its function is as follows. With S4 and S5 plays an important role in translational accuracy. Located at the interface of the 30S and 50S subunits. This Oenothera elata subsp. hookeri (Hooker's evening primrose) protein is Small ribosomal subunit protein uS12c (rps12).